The following is an 863-amino-acid chain: Autotaxin (863 aa).

The first 27 residues, 1-27, serve as a signal peptide directing secretion; sequence MARRSSFQSCQIISLFTFAVGVNICLG. A propeptide spans 28–35 (removed by furin); the sequence is FTAHRIKR. Residue Asn-54 is glycosylated (N-linked (GlcNAc...) asparagine). SMB domains are found at residues 55-98 and 99-143; these read ISGS…LKTA and RGWE…GESH. Disulfide bonds link Cys-59/Cys-76, Cys-63/Cys-94, Cys-74/Cys-87, Cys-80/Cys-86, Cys-103/Cys-120, Cys-108/Cys-138, Cys-118/Cys-131, Cys-124/Cys-130, Cys-149/Cys-195, and Cys-157/Cys-351. The Cell attachment site signature appears at 127-129; it reads RGD. The phosphodiesterase stretch occupies residues 145–502; sequence VDDDCEEIKA…STFKYKTKVP (358 aa). Zn(2+) contacts are provided by Asp-172 and Thr-210. Thr-210 (nucleophile) is an active-site residue. Positions 210, 231, and 312 each coordinate 1-(9Z-octadecenoyl)-sn-glycero-3-phosphate. Residues Thr-210, Asn-231, and Asp-312 each coordinate 1-hexadecanoyl-sn-glycero-3-phosphate. 1-tetradecanoyl-sn-glycerol 3-phosphate is bound by residues Thr-210, Asn-231, and Asp-312. Zn(2+) is bound by residues Asp-312, His-316, Asp-359, and His-360. Cystine bridges form between Cys-367–Cys-469, Cys-414–Cys-806, Cys-567–Cys-667, Cys-569–Cys-652, and Cys-775–Cys-785. The N-linked (GlcNAc...) asparagine glycan is linked to Asn-411. His-475 provides a ligand contact to Zn(2+). Residue His-475 participates in 1-(9Z-octadecenoyl)-sn-glycero-3-phosphate binding. His-475 contacts 1-hexadecanoyl-sn-glycero-3-phosphate. His-475 provides a ligand contact to 1-tetradecanoyl-sn-glycerol 3-phosphate. The N-linked (GlcNAc...) asparagine glycan is linked to Asn-525. A nuclease-like domain region spans residues 598–863; that stretch reads LYGRPAVLYR…TYLHTYESEI (266 aa). 5 residues coordinate Ca(2+): Asp-740, Asp-742, Asp-744, Leu-746, and Asp-748. Residue Asn-807 is glycosylated (N-linked (GlcNAc...) asparagine). The interval 830–851 is required for secretion; sequence IEHLTSLDFFRKTSRSYPEILT.

Belongs to the nucleotide pyrophosphatase/phosphodiesterase family. Zn(2+) is required as a cofactor. The cofactor is Ca(2+). N-glycosylation, but not furin-cleavage, plays a critical role on secretion and on lysoPLD activity. Post-translationally, the interdomain disulfide bond between Cys-414 and Cys-806 is essential for catalytic activity. As to expression, detected in blood plasma (at protein level). Predominantly expressed in brain, placenta, ovary, and small intestine. Expressed in a number of carcinomas such as hepatocellular and prostate carcinoma, neuroblastoma and non-small-cell lung cancer. Expressed in body fluids such as plasma, cerebral spinal fluid (CSF), saliva, follicular and amniotic fluids. Not detected in leukocytes. Isoform 1 is more highly expressed in peripheral tissues than in the central nervous system (CNS). Adipocytes only express isoform 1. Isoform 3 is more highly expressed in the brain than in peripheral tissues.

It localises to the secreted. It carries out the reaction a 1-O-alkyl-sn-glycero-3-phosphoethanolamine + H2O = a 1-O-alkyl-sn-glycero-3-phosphate + ethanolamine + H(+). It catalyses the reaction a 1-acyl-sn-glycero-3-phosphoethanolamine + H2O = a 1-acyl-sn-glycero-3-phosphate + ethanolamine + H(+). The enzyme catalyses 1-(9Z-octadecenoyl)-sn-glycero-3-phosphoethanolamine + H2O = 1-(9Z-octadecenoyl)-sn-glycero-3-phosphate + ethanolamine + H(+). The catalysed reaction is a 1-O-alkyl-sn-glycero-3-phosphocholine + H2O = a 1-O-alkyl-sn-glycero-3-phosphate + choline + H(+). It carries out the reaction 1-O-(9Z-octadecenyl)-sn-glycero-3-phosphocholine + H2O = 1-O-(9Z-octadecenyl)-sn-glycero-3-phosphate + choline + H(+). It catalyses the reaction 1-O-hexadecyl-sn-glycero-3-phosphocholine + H2O = 1-O-hexadecyl-sn-glycero-3-phosphate + choline + H(+). The enzyme catalyses a 1-O-(1Z-alkenyl)-sn-glycero-3-phosphocholine + H2O = a 1-O-(1Z-alkenyl)-sn-glycero-3-phosphate + choline + H(+). The catalysed reaction is a 1-acyl-sn-glycero-3-phosphocholine + H2O = a 1-acyl-sn-glycero-3-phosphate + choline + H(+). It carries out the reaction 1-dodecanoyl-sn-glycero-3-phosphocholine + H2O = 1-dodecanoyl-sn-glycerol 3-phosphate + choline + H(+). It catalyses the reaction 1-(9Z-octadecenoyl)-sn-glycero-3-phosphocholine + H2O = 1-(9Z-octadecenoyl)-sn-glycero-3-phosphate + choline + H(+). The enzyme catalyses 1-tetradecanoyl-sn-glycero-3-phosphocholine + H2O = 1-tetradecanoyl-sn-glycerol 3-phosphate + choline + H(+). The catalysed reaction is 1-decanoyl-sn-glycero-3-phosphocholine + H2O = 1-decanoyl-sn-glycero-3-phosphate + choline + H(+). It carries out the reaction 1-octadecanoyl-sn-glycero-3-phosphocholine + H2O = 1-octadecanoyl-sn-glycero-3-phosphate + choline + H(+). It catalyses the reaction 1-hexadecanoyl-sn-glycero-3-phosphocholine + H2O = 1-hexadecanoyl-sn-glycero-3-phosphate + choline + H(+). The enzyme catalyses 1-hexanoyl-sn-glycero-3-phosphocholine + H2O = 1-hexanoyl-sn-glycero-3-phosphate + choline + H(+). The catalysed reaction is 1-(9Z,12Z)-octadecadienoyl-sn-glycero-3-phosphocholine + H2O = 1-(9Z,12Z)-octadecadienoyl-sn-glycero-3-phosphate + choline + H(+). It carries out the reaction sphing-4-enine-phosphocholine + H2O = sphing-4-enine 1-phosphate + choline + H(+). It catalyses the reaction 1-(5Z,8Z,11Z,14Z-eicosatetraenoyl)-sn-glycero-3-phosphocholine + H2O = 1-(5Z,8Z,11Z,14Z-eicosatetraenoyl)-sn-glycero-3-phosphate + choline + H(+). The enzyme catalyses a 2-acyl-sn-glycero-3-phosphocholine + H2O = a 2-acyl-sn-glycerol 3-phosphate + choline + H(+). The catalysed reaction is a 1,2-diacyl-sn-glycero-3-phosphocholine + H2O = a 1,2-diacyl-sn-glycero-3-phosphate + choline + H(+). It carries out the reaction 1,2-dioctanoyl-sn-glycero-3-phosphocholine + H2O = 1,2-dioctanoyl-sn-glycero-3-phosphate + choline + H(+). It catalyses the reaction 1,2-didecanoyl-sn-glycero-3-phosphocholine + H2O = 1,2-didecanoyl-sn-glycero-3-phosphate + choline + H(+). The enzyme catalyses a 1-acyl-sn-glycero-3-phospho-L-serine + H2O = a 1-acyl-sn-glycero-3-phosphate + L-serine + H(+). The catalysed reaction is 1-(9Z-octadecenoyl)-sn-glycero-3-phospho-L-serine + H2O = 1-(9Z-octadecenoyl)-sn-glycero-3-phosphate + L-serine + H(+). It carries out the reaction a 2-acyl-sn-glycero-3-phospho-L-serine + H2O = a 2-acyl-sn-glycerol 3-phosphate + L-serine + H(+). With respect to regulation, inhibited by lysophosphatidic acid (LPA) and sphingosine-1-phosphate (S1P). Inhibited by EDTA and EGTA. Secreted lysophospholipase D that hydrolyzes lysophospholipids to produce the signaling molecule lysophosphatidic acid (LPA) in extracellular fluids. Its major substrate is lysophosphatidylcholine. Can also act on sphingosylphosphorylcholine producing sphingosine-1-phosphate, a modulator of cell motility. Can hydrolyze, in vitro, bis-pNPP, to some extent pNP-TMP, and barely ATP. Involved in several motility-related processes such as angiogenesis and neurite outgrowth. Acts as an angiogenic factor by stimulating migration of smooth muscle cells and microtubule formation. Stimulates migration of melanoma cells, probably via a pertussis toxin-sensitive G protein. May have a role in induction of parturition. Possible involvement in cell proliferation and adipose tissue development. Required for LPA production in activated platelets, cleaves the sn-1 lysophospholipids to generate sn-1 lysophosphatidic acids containing predominantly 18:2 and 20:4 fatty acids. Shows a preference for the sn-1 to the sn-2 isomer of 1-O-alkyl-sn-glycero-3-phosphocholine (lyso-PAF). This chain is Autotaxin, found in Homo sapiens (Human).